Reading from the N-terminus, the 168-residue chain is Alpha-N-acetylgalactosamine-specific lectin (168 aa).

A signal peptide spans 1–18 (MAFFRALCFVLLVGFAAA). The 126-residue stretch at 38-163 (YNGNCYRYFG…CSRAFAYVCK (126 aa)) folds into the C-type lectin domain. 2 cysteine pairs are disulfide-bonded: cysteine 59-cysteine 162 and cysteine 136-cysteine 154.

As to quaternary structure, monomer, homodimer and homooligomer.

Alpha-N-acetylgalactosamine-specific lectin. The oligomeric form has Ca(2+)-dependent hemagglutination activity towards sheep erythrocytes. Its hemagglutination activity is inhibited by various monosaccharides, oligosaccharides and glycopeptides, including inhibition by GalNAc, blood group A trisaccharide, Tn antigen, mucin and asialomucin. The sequence is that of Alpha-N-acetylgalactosamine-specific lectin from Patiria pectinifera (Starfish).